The sequence spans 780 residues: Cullin-5 (780 aa).

Position 34 is a phosphoserine (Ser-34). Thr-210 carries the phosphothreonine modification. The 62-residue stretch at 711-772 (RILRTQEAII…HKYIRRDESD (62 aa)) folds into the Cullin neddylation domain. A Glycyl lysine isopeptide (Lys-Gly) (interchain with G-Cter in NEDD8) cross-link involves residue Lys-724.

Belongs to the cullin family. Component of multiple cullin-5-RING E3 ubiquitin-protein ligase complexes (ECS complexes, also named CRL5 complexes) formed of CUL5, Elongin BC (ELOB and ELOC), RNF7/RBX2 and a variable SOCS box domain-containing protein as substrate-specific recognition component. CUL5-containing ECS complexes specifically contain RNF7/RBX2, and not RBX1, as catalytic subunit. Component of the ECS(ASB2) complex with the substrate recognition component ASB2. Component of the ECS(ASB6) complex with the substrate recognition component ASB6. Component of the ECS(ASB7) complex with the substrate recognition component ASB7. Component of the ECS(ASB9) complex with the substrate recognition component ASB9. Component of the ECS(ASB11) complex with the substrate recognition component ASB11. Component of the ECS(ASB12) complex with the substrate recognition component ASB12. Component of the ECS(LRRC41) complex with the substrate recognition component LRRC41. Component of the ECS(SOCS1) complex with the substrate recognition component SOCS1. Component of the ECS(SOCS2) complex with the substrate recognition component SOCS2. Component of the ECS(WSB1) complex with the substrate recognition subunit WSB1. Component of the ECS(SOCS3) complex with the substrate recognition component SOCS3. Component of the ECS(SOCS7) complex with the substrate recognition component SOCS7. Component of the ECS(SPSB1) complex with the substrate recognition component SPSB1. Component of the ECS(SPSB3) complex with the substrate recognition component SPSB3. Component of the ECS(SPSB2) complex with the substrate recognition component SPSB2. Component of the ECS(SPSB4) complex with the substrate recognition component SPSB4. Component of the ECS(RAB40) complex with the substrate recognition subunit RAB40A, RAB40B or RAB40C. Component of the ECS(KLHDC1) complex with the substrate recognition component KLHDC1. Component of the ECS(PCMTD1) complex with the substrate recognition subunit PCMTD1. May also form complexes containing RBX1 and ELOA or VHL; additional evidence is however required to confirm this result in vivo. Interacts (when neddylated) with ARIH2; leading to activate the E3 ligase activity of ARIH2. Interacts with ERCC6; the interaction is induced by DNA damaging agents or inhibitors of RNA polymerase II elongation. Interacts with ELOA (via the BC-box). Interacts (unneddylated form) with DCUN1D1, DCUN1D2, DCUN1D3, DCUN1D4 and DCUN1D5; these interactions promote the cullin neddylation. Post-translationally, neddylated; which enhances the ubiquitination activity of ECS complexes and prevents binding of the inhibitor CAND1. Deneddylated via its interaction with the COP9 signalosome (CSN).

Its subcellular location is the nucleus. Its pathway is protein modification; protein ubiquitination. Its function is as follows. Core component of multiple cullin-5-RING E3 ubiquitin-protein ligase complexes (ECS complexes, also named CRL5 complexes), which mediate the ubiquitination and subsequent proteasomal degradation of target proteins. Acts a scaffold protein that contributes to catalysis through positioning of the substrate and the ubiquitin-conjugating enzyme. The functional specificity of the E3 ubiquitin-protein ligase complex depends on the variable SOCS box-containing substrate recognition component. Acts as a key regulator of neuron positioning during cortex development: component of various SOCS-containing ECS complexes, such as the ECS(SOCS7) complex, that regulate reelin signaling by mediating ubiquitination and degradation of DAB1. ECS(SOCS1) seems to direct ubiquitination of JAK2. The ECS(SOCS2) complex mediates the ubiquitination and subsequent proteasomal degradation of phosphorylated EPOR and GHR. The ECS(SPSB3) complex catalyzes ubiquitination of nuclear CGAS. ECS(KLHDC1) complex is part of the DesCEND (destruction via C-end degrons) pathway and mediates ubiquitination and degradation of truncated SELENOS selenoprotein produced by failed UGA/Sec decoding, which ends with a glycine. The ECS(ASB9) complex mediates ubiquitination and degradation of CKB. As part of some ECS complex, promotes 'Lys-11'-linked ubiquitination and degradation of BTRC. As part of a multisubunit ECS complex, polyubiquitinates monoubiquitinated POLR2A. As part of the ECS(RAB40C) complex, mediates ANKRD28 ubiquitination and degradation, thereby regulating protein phosphatase 6 (PP6) complex activity and focal adhesion assembly during cell migration. As part of the ECS(RAB40A) complex, mediates RHOU 'Lys-48'-linked ubiquitination and degradation, thus inhibiting focal adhesion disassembly during cell migration. As part of the ECS(RAB40B) complex, mediates LIMA1/EPLIN and RAP2 ubiquitination, thereby regulating actin cytoskeleton dynamics and stress fiber formation during cell migration. May form a cell surface vasopressin receptor. The protein is Cullin-5 of Pongo abelii (Sumatran orangutan).